The primary structure comprises 186 residues: Lipoprotein signal peptidase (186 aa).

Helical transmembrane passes span 11-31 (WIPLFAAGLVVVLDQCAKLLV), 44-64 (VLGDFVRIVHVYNVGAAFSIG), and 70-90 (VLRTLVLGIVPLIIMFLIVFS). Residues D128 and D150 contribute to the active site. The helical transmembrane segment at 145–165 (AFNIADAVIMTCGLLLIISFI) threads the bilayer.

It belongs to the peptidase A8 family.

The protein resides in the cell inner membrane. The catalysed reaction is Release of signal peptides from bacterial membrane prolipoproteins. Hydrolyzes -Xaa-Yaa-Zaa-|-(S,diacylglyceryl)Cys-, in which Xaa is hydrophobic (preferably Leu), and Yaa (Ala or Ser) and Zaa (Gly or Ala) have small, neutral side chains.. The protein operates within protein modification; lipoprotein biosynthesis (signal peptide cleavage). Functionally, this protein specifically catalyzes the removal of signal peptides from prolipoproteins. The sequence is that of Lipoprotein signal peptidase from Treponema pallidum (strain Nichols).